Reading from the N-terminus, the 448-residue chain is MIRSLRIRLMLGAAALAVLFMLALLPALQRAFGIALENTIEQRLAADVATLVSAARVEKGRLVMPEHLPVEEFNLPEAKVLGYIYDQNGDLLWRSTSAADESINYTPRYDGRGNEFHTTRDAKGEEFFVFDVEIDLLRGKQAAYSIVTMQSVSEFESLLKGFREQLYLWLGGALLVLLGLLWLGLTWGFRAMRGLSSELDQIESGERESLSEEHPRELLRLTHSLNRLLRSEHKQRERYRHSLGDLAHSLKTPLAVLQGVGDQLAEEPGNREQVRVLQGQIERMSQQIGYQLQRASLRKSGLVRHREQLAPLVETLCDALDKVYRDKRVSLQRDFSPSFSVPVERGALLELLGNLLENAYRLCLGRVRVGARLGPGYSELWVEDDGPGVPAEQRARIIRRGERADTQHPGQGIGLAVALDIIESYDGELSLDDSELGGACFRIRFATV.

The signal sequence occupies residues 1 to 33 (MIRSLRIRLMLGAAALAVLFMLALLPALQRAFG). A helical transmembrane segment spans residues 169–189 (WLGGALLVLLGLLWLGLTWGF). Residues 186-237 (TWGFRAMRGLSSELDQIESGERESLSEEHPRELLRLTHSLNRLLRSEHKQRE) form the HAMP domain. The 204-residue stretch at 245–448 (DLAHSLKTPL…ACFRIRFATV (204 aa)) folds into the Histidine kinase domain. Residue H248 is modified to Phosphohistidine; by autocatalysis.

Its subcellular location is the membrane. It catalyses the reaction ATP + protein L-histidine = ADP + protein N-phospho-L-histidine.. Functionally, member of the two-component regulatory system PhoP/PhoQ that plays a role in the regulation of resistance towards polymyxin B and cationic antimicrobial peptides in response to limiting concentrations of Mg(2+). May function as a membrane-associated protein kinase that phosphorylates PhoP in response to environmental signals leading to activation of specific gene promoters. The protein is Two-component sensor PhoQ (phoQ) of Pseudomonas aeruginosa (strain ATCC 15692 / DSM 22644 / CIP 104116 / JCM 14847 / LMG 12228 / 1C / PRS 101 / PAO1).